We begin with the raw amino-acid sequence, 282 residues long: tRNA (guanine-N(7)-)-methyltransferase (282 aa).

The tract at residues 1-36 (MAGPPNKKQKREDYRTARENGEESKELPKKKFYRQR) is disordered. The segment covering 10 to 29 (KREDYRTARENGEESKELPK) has biased composition (basic and acidic residues). S-adenosyl-L-methionine is bound by residues glycine 100, 123-124 (EI), 158-159 (NT), and cysteine 178. Aspartate 181 is a catalytic residue. 256-258 (TEE) is an S-adenosyl-L-methionine binding site.

It belongs to the class I-like SAM-binding methyltransferase superfamily. TrmB family. In terms of assembly, forms a complex with trm82.

It localises to the nucleus. The enzyme catalyses guanosine(46) in tRNA + S-adenosyl-L-methionine = N(7)-methylguanosine(46) in tRNA + S-adenosyl-L-homocysteine. Its pathway is tRNA modification; N(7)-methylguanine-tRNA biosynthesis. Functionally, catalyzes the formation of N(7)-methylguanine at position 46 (m7G46) in tRNA. The chain is tRNA (guanine-N(7)-)-methyltransferase (trm8) from Botryotinia fuckeliana (strain B05.10) (Noble rot fungus).